Reading from the N-terminus, the 650-residue chain is Macrolide export ATP-binding/permease protein MacB (650 aa).

The 240-residue stretch at 9–248 (IELIDLERVF…RPLGRPPGGA (240 aa)) folds into the ABC transporter domain. An ATP-binding site is contributed by 45-52 (GQSGSGKS). Transmembrane regions (helical) follow at residues 276–296 (ALTL…MAIG), 525–545 (LTLL…IGVM), 580–600 (AVAV…GAAL), and 615–635 (PPIV…YLPA).

The protein belongs to the ABC transporter superfamily. Macrolide exporter (TC 3.A.1.122) family. Homodimer.

It is found in the cell inner membrane. In terms of biological role, non-canonical ABC transporter that contains transmembrane domains (TMD), which form a pore in the inner membrane, and an ATP-binding domain (NBD), which is responsible for energy generation. Confers resistance against macrolides. This chain is Macrolide export ATP-binding/permease protein MacB, found in Rhodospirillum rubrum (strain ATCC 11170 / ATH 1.1.1 / DSM 467 / LMG 4362 / NCIMB 8255 / S1).